A 1415-amino-acid polypeptide reads, in one-letter code: MPSSLLLATRNQILSMMNCWFSCAPKNRHAADWNKYDDRLMKAAERGDVEKVSSILAKKGINPGKLDVEGRSAFHVVASKGNLECLNAILIHGVDITTSDTAGRNALHLAAKYGHALCLQKLLQYNCPTEHADLQGRTALHDAAMADCPSSIQLLCDHGASVNAKDVDGRTPLVLATQMCRPAICQLLIDRGAEINSRDKQNRTALMLGCEYGCKDAVEVLLKNGADVSLLDALGHDSSYYARIGDNLDILTLLKTASENTNKGRELWKKGPSLQQRNLPYMLDEVNVKSSQREHRNIQELEIENEDLKDRLRKIQQEQRILLDKVNGLQLQLNEEVMVADDLESEKEKLKSLLVAKEKQHEESLRTIESLKNRFKYFESDHLGSGSHFSNRKEDMLLKQGQMYMTCTSPGVPAHMQSRSMLRPLELSLPNQTSYSENDLLKKELEAMRTFCESAKQDRLKLQNELAHKVAECKALGLECERIKEDSDEQIKQLEDALKDVQKRMYESEGKVKQMQTHFLALKEHLTSEAAIGNHRLMEELKDQLKDMKAKYEGASAEVGKLRNQIKQNELLVEQFRRDEGKLVEENKRLQKELSMCETERDKKGRRVAEVEGQVKELLAKLTLSVPTEKFESMKSLLSSEVNEKVKKIGETEREYEKSLTEIRQLRRELENCKAKLAQHVKPEEHEQLKSRLEQRAGELAKKVTELTSKNQVLQRDVEKVYLDNKLLNQQVHNLTSEIKSHYVPLQVSEEMKKSHDVTVEELKKQLLDVTQKCADKQLEMEKLLLENDSLSKNVSRLETVFVPPEKHQKEVTALKSSVADLKRQLLELNKKCGEDREKINALVSENTSLKKTLSNQYVPAKTHEEVKTALSGTLDKTNRELLDAKKKWEDLNQEFVKTKDENEILKRNLENTQSQIKAEYISLREHEEKMSAINQNMKSVQDNSAEILANYRKGQEEIVTLHAEIEAQKKELDTIQECIKLKYAPIISFEECERKFKATEKELKEQLSEQMQKYHVREEEAKKYKQENDKLKKEIFTLQKDLKDKNVLIENSHDMERALNRKAEELNKQLKDLLQKYSEIKTEKEKLVDDNARQTSELLAAQTLLQKQHVPLEQVETLKKSLNSTIEHLKEELKNKQKCYEKEQQTVAKLHQMLENQKNSSVPLGEHLRVKEAFEKEVGMIKASLREKEEESQNKTEEVSKLQSEVQDTKQALQKLETREVVDLSKYKATKSDLETQISNLNEKLANLNRKYEEACEEVLRAQRKQLSAKDEKELLHFSIEQEIKDQQERCDKSLTTITELQKRIQESAKQIEAKDNKITELLNDVERLKQALSGLSQLTSPSGSPSKRQSQLIDTLQHQVKSLQQQLADTDRQHQEVIAIYRTHLLSAAQGHMDEDVQAALLQIIQMRQGLVC.

5 ANK repeats span residues 69 to 98 (EGRS…DITT), 102 to 131 (AGRN…PTEH), 135 to 164 (QGRT…SVNA), 168 to 197 (DGRT…EINS), and 201 to 230 (QNRT…DVSL). The stretch at 288–376 (VKSSQREHRN…TIESLKNRFK (89 aa)) forms a coiled coil. Residues 617–646 (ELLAKLTLSVPTEKFESMKSLLSSEVNEKV) form an ANK 6 repeat. Residues 759 to 1381 (TVEELKKQLL…TDRQHQEVIA (623 aa)) are a coiled coil. A Glycyl lysine isopeptide (Lys-Gly) (interchain with G-Cter in SUMO2) cross-link involves residue Lys1034. Basic and acidic residues predominate over residues 1186–1201 (LREKEEESQNKTEEVS). The interval 1186–1205 (LREKEEESQNKTEEVSKLQS) is disordered.

As to quaternary structure, component of the apoptosome complex, composed of APAF1, pro-caspase-9 and UACA. In the complex, it probably interacts directly with APAF1. Interacts with LGALS3, ARF6 and ACTB. Interacts with RAB39A. Highly expressed in adrenal, testis, kidney and large intestine.

It is found in the nucleus. It localises to the cytoplasm. The protein resides in the cytoskeleton. In terms of biological role, regulates APAF1 expression and plays an important role in the regulation of stress-induced apoptosis. Promotes apoptosis by regulating three pathways, apoptosome up-regulation, LGALS3/galectin-3 down-regulation and NF-kappa-B inactivation. Regulates the redistribution of APAF1 into the nucleus after proapoptotic stress. Down-regulates the expression of LGALS3 by inhibiting NFKB1. Modulates isoactin dynamics to regulate the morphological alterations required for cell growth and motility. Interaction with ARF6 may modulate cell shape and motility after injury. May be involved in multiple neurite formation. This Canis lupus familiaris (Dog) protein is Uveal autoantigen with coiled-coil domains and ankyrin repeats (UACA).